A 183-amino-acid chain; its full sequence is Ribosome rescue factor SmrB (183 aa).

Residues 98–173 enclose the Smr domain; it reads LDLHGLTQLQ…GDAALLVLIE (76 aa).

It belongs to the SmrB family. As to quaternary structure, associates with collided ribosomes, but not with correctly translating polysomes.

Functionally, acts as a ribosome collision sensor. Detects stalled/collided disomes (pairs of ribosomes where the leading ribosome is stalled and a second ribosome has collided with it) and endonucleolytically cleaves mRNA at the 5' boundary of the stalled ribosome. Stalled/collided disomes form a new interface (primarily via the 30S subunits) that binds SmrB. Cleaved mRNA becomes available for tmRNA ligation, leading to ribosomal subunit dissociation and rescue of stalled ribosomes. This Salmonella arizonae (strain ATCC BAA-731 / CDC346-86 / RSK2980) protein is Ribosome rescue factor SmrB.